The chain runs to 176 residues: Cathelicidin-2 (176 aa).

A signal peptide spans 1–29 (METQGASLSLGRWSLWLLLLGLVLPSASA). Gln-30 carries the pyrrolidone carboxylic acid modification. Positions 30 to 130 (QALSYREAVL…DINCNELQSV (101 aa)) are excised as a propeptide. 2 cysteine pairs are disulfide-bonded: Cys-85/Cys-96 and Cys-107/Cys-124. A disordered region spans residues 135–176 (PIRRPPIRPPFRPPFRPPVRPPIRPPFRPPFRPPIGPFPGRR). Over residues 141-176 (IRPPFRPPFRPPVRPPIRPPFRPPFRPPIGPFPGRR) the composition is skewed to pro residues. At Pro-173 the chain carries Proline amide. Positions 174–176 (GRR) are cleaved as a propeptide — removed in mature form.

The protein belongs to the cathelicidin family. Post-translationally, elastase is responsible for its maturation.

It is found in the secreted. Its function is as follows. Binds to the lipid A moiety of bacterial lipipolysaccharides (LPS), a glycolipid present in the outer membrane of all Gram-negative bacteria. Potent antimicrobial activity. The chain is Cathelicidin-2 (CATHL2) from Ovis aries (Sheep).